The sequence spans 388 residues: Succinate--CoA ligase [ADP-forming] subunit beta (388 aa).

Positions 9 to 244 (KSLFAEYGLP…PSQDDAREAH (236 aa)) constitute an ATP-grasp domain. ATP-binding positions include Lys46, 53–55 (GRG), Glu99, Thr102, and Glu107. Positions 199 and 213 each coordinate Mg(2+). Substrate contacts are provided by residues Asn264 and 321–323 (GIV).

This sequence belongs to the succinate/malate CoA ligase beta subunit family. As to quaternary structure, heterotetramer of two alpha and two beta subunits. Mg(2+) serves as cofactor.

It catalyses the reaction succinate + ATP + CoA = succinyl-CoA + ADP + phosphate. It carries out the reaction GTP + succinate + CoA = succinyl-CoA + GDP + phosphate. Its pathway is carbohydrate metabolism; tricarboxylic acid cycle; succinate from succinyl-CoA (ligase route): step 1/1. In terms of biological role, succinyl-CoA synthetase functions in the citric acid cycle (TCA), coupling the hydrolysis of succinyl-CoA to the synthesis of either ATP or GTP and thus represents the only step of substrate-level phosphorylation in the TCA. The beta subunit provides nucleotide specificity of the enzyme and binds the substrate succinate, while the binding sites for coenzyme A and phosphate are found in the alpha subunit. This chain is Succinate--CoA ligase [ADP-forming] subunit beta, found in Shewanella woodyi (strain ATCC 51908 / MS32).